Reading from the N-terminus, the 196-residue chain is Orotate phosphoribosyltransferase (196 aa).

117-125 (EDIVTTGLS) contacts 5-phospho-alpha-D-ribose 1-diphosphate. Orotate-binding residues include Thr121 and Arg149.

The protein belongs to the purine/pyrimidine phosphoribosyltransferase family. PyrE subfamily. As to quaternary structure, homodimer. The cofactor is Mg(2+).

It carries out the reaction orotidine 5'-phosphate + diphosphate = orotate + 5-phospho-alpha-D-ribose 1-diphosphate. It participates in pyrimidine metabolism; UMP biosynthesis via de novo pathway; UMP from orotate: step 1/2. Functionally, catalyzes the transfer of a ribosyl phosphate group from 5-phosphoribose 1-diphosphate to orotate, leading to the formation of orotidine monophosphate (OMP). The chain is Orotate phosphoribosyltransferase from Methylobacterium sp. (strain 4-46).